The following is a 198-amino-acid chain: Probable GTP-binding protein EngB (198 aa).

The EngB-type G domain occupies 22–196; it reads NLSEIAFVGR…WNWIKGQAEL (175 aa). Residues 30–37, 57–61, 75–78, 142–145, and 175–177 each bind GTP; these read GRSNVGKS, GKTQT, DVPG, TKAD, and FSA. Ser37 and Thr59 together coordinate Mg(2+).

Belongs to the TRAFAC class TrmE-Era-EngA-EngB-Septin-like GTPase superfamily. EngB GTPase family. Mg(2+) serves as cofactor.

Its function is as follows. Necessary for normal cell division and for the maintenance of normal septation. This is Probable GTP-binding protein EngB from Oenococcus oeni (strain ATCC BAA-331 / PSU-1).